A 295-amino-acid polypeptide reads, in one-letter code: Protease HtpX (295 aa).

Transmembrane regions (helical) follow at residues 4–24 (ILLFVATNLAVVLVASITLSL) and 41–61 (SSLLVFCAVFGFAGSLVSLFI). Histidine 147 provides a ligand contact to Zn(2+). The active site involves glutamate 148. Residue histidine 151 participates in Zn(2+) binding. The next 2 membrane-spanning stretches (helical) occupy residues 158–178 (VTLALVQGVVNTFVMFFARII) and 199–219 (VATIVAELILGILASMIVMWF). Glutamate 224 is a binding site for Zn(2+).

This sequence belongs to the peptidase M48B family. Requires Zn(2+) as cofactor.

The protein resides in the cell inner membrane. This chain is Protease HtpX, found in Pseudomonas putida (strain GB-1).